A 239-amino-acid polypeptide reads, in one-letter code: Exosome complex component Rrp4 (239 aa).

One can recognise an S1 motif domain in the interval 67-139 (GDFVVGIVEE…PVQRVELSLL (73 aa)). Residues 151-217 (QGGQVVEIDP…LAVRAIREIE (67 aa)) enclose the KH domain.

The protein belongs to the RRP4 family. As to quaternary structure, component of the archaeal exosome complex. Forms a trimer of Rrp4 and/or Csl4 subunits. The trimer associates with a hexameric ring-like arrangement composed of 3 Rrp41-Rrp42 heterodimers.

Its subcellular location is the cytoplasm. Its function is as follows. Non-catalytic component of the exosome, which is a complex involved in RNA degradation. Increases the RNA binding and the efficiency of RNA degradation. Confers strong poly(A) specificity to the exosome. This Methanopyrus kandleri (strain AV19 / DSM 6324 / JCM 9639 / NBRC 100938) protein is Exosome complex component Rrp4.